Here is a 231-residue protein sequence, read N- to C-terminus: tRNA (guanine-N(1)-)-methyltransferase (231 aa).

S-adenosyl-L-methionine contacts are provided by residues Gly-112 and 132–137; that span reads LGDFVL.

Belongs to the RNA methyltransferase TrmD family. In terms of assembly, homodimer.

The protein resides in the cytoplasm. The enzyme catalyses guanosine(37) in tRNA + S-adenosyl-L-methionine = N(1)-methylguanosine(37) in tRNA + S-adenosyl-L-homocysteine + H(+). Its function is as follows. Specifically methylates guanosine-37 in various tRNAs. This is tRNA (guanine-N(1)-)-methyltransferase from Gloeothece citriformis (strain PCC 7424) (Cyanothece sp. (strain PCC 7424)).